Reading from the N-terminus, the 485-residue chain is Auxin transporter protein 1 (485 aa).

Residues 1-59 (MSEGVEAIVANDNGTDQVNGNRTGKDNEEHDGSTGSNLSNFLWHGGSVWDAWFSCASNQ) are Cytoplasmic-facing. Over residues 12–22 (DNGTDQVNGNR) the composition is skewed to polar residues. A disordered region spans residues 12-33 (DNGTDQVNGNRTGKDNEEHDGS). Residues 23–32 (TGKDNEEHDG) show a composition bias toward basic and acidic residues. The helical transmembrane segment at 60–77 (VAQVLLTLPYSFSQLGML) threads the bilayer. Over 78–79 (SG) the chain is Extracellular. The chain crosses the membrane as a helical span at residues 80–100 (IVLQIFYGLLGSWTAYLISVL). The Cytoplasmic segment spans residues 101 to 135 (YVEYRARKEKEGKSFKNHVIQWFEVLDGLLGSYWK). Residues 136-156 (ALGLAFNCTFLLFGSVIQLIA) traverse the membrane as a helical segment. Residues 157–172 (CASNIYYINDHLDKRT) are Extracellular-facing. Residues 173–193 (WTYIFGACCATTVFIPSFHNY) traverse the membrane as a helical segment. Residues 194–196 (RIW) lie on the Cytoplasmic side of the membrane. Residues 197–217 (SFLGLGMTTYTAWYLAIASII) traverse the membrane as a helical segment. Topologically, residues 218 to 232 (HGQAEGVKHSGPTKL) are extracellular. Residues 233–253 (VLYFTGATNILYTFGGHAVTV) traverse the membrane as a helical segment. Topologically, residues 254 to 266 (EIMHAMWKPQKFK) are cytoplasmic. A helical transmembrane segment spans residues 267–287 (YIYLMATLYVFTLTIPSAAAV). Residues 288-314 (YWAFGDALLDHSNAFSLMPKNAWRDAA) lie on the Extracellular side of the membrane. Residues 315-335 (VILMLIHQFITFGFACTPLYF) form a helical membrane-spanning segment. The Cytoplasmic portion of the chain corresponds to 336–356 (VWEKVIGMHDTKSICLRALAR). A helical transmembrane segment spans residues 357–377 (LPVVIPIWFLAIIFPFFGPIN). Serine 378 is a topological domain (extracellular). A helical transmembrane segment spans residues 379–399 (AVGALLVSFTVYIIPSLAHML). Topologically, residues 400 to 425 (TYRSASARQNAAEKPPFFMPSWTAMY) are cytoplasmic. The chain crosses the membrane as a helical span at residues 426 to 446 (VLNAFVVVWVLIVGFGFGGWA). At 447–485 (SVTNFVRQVDTFGLFAKCYQCKPAAAAAHAPVSALHHRL) the chain is on the extracellular side.

The protein belongs to the amino acid/polyamine transporter 2 family. Amino acid/auxin permease (AAAP) (TC 2.A.18.1) subfamily. Expressed in root and shoot apical tissues. In root apex, confined to stele initials, protophloem poles, statolith-containing S2 columella cells, lateral root cap cells (LRC), and in epidermal cells from the distal elongation zone (DEZ) up to central elongation zone (CEZ).

Its subcellular location is the cell membrane. Auxin uptake mediated by AUX1 is inhibited by chromosaponin-1 (CSI), 1-naphthoxyacetic acid (1-NOA) and 3-chloro-4-hydroxyphenylacetic acid (CHPAA). Carrier protein involved in proton-driven auxin influx. Mediates the formation of auxin gradient from developing leaves (site of auxin biosynthesis) to tips by contributing to the loading of auxin in vascular tissues and facilitating acropetal (base to tip) auxin transport within inner tissues of the root apex, and basipetal (tip to base) auxin transport within outer tissues of the root apex. Unloads auxin from the mature phloem to deliver the hormone to the root meristem via the protophloem cell files. Coordinated subcellular localization of AUX1 is regulated by a brefeldin A-sensitive (BFA) vesicle trafficking process. Involved in lateral root formation, trichoblast polarization and root hair elongation. Required for gravitropism and thigmotropism, especially in roots, by modulating responses to auxin, ethylene and cytokinins such as benzyladenine (BA). Needed for ammonium-mediated root-growth inhibition. Confers sensitivity to the herbicide 2,4-dichlorophenoxyacetic acid (2,4-D, auxin analog), and to polar auxin transport inhibitors such as N-1-naphthylphthalamic acid (NPA) and 2,3,5-triiodobenzoic acid (TIBA). This Arabidopsis thaliana (Mouse-ear cress) protein is Auxin transporter protein 1 (AUX1).